The sequence spans 263 residues: Oncostatin-M (263 aa).

The first 24 residues, M1 to A24, serve as a signal peptide directing secretion. 2 cysteine pairs are disulfide-bonded: C28–C139 and C71–C177. N-linked (GlcNAc...) asparagine glycans are attached at residues N30, N44, and N145. A propeptide spanning residues Q207–A263 is cleaved from the precursor. A compositionally biased stretch (basic residues) spans W241–P252. Residues W241–A263 are disordered. The segment covering S253 to A263 has biased composition (polar residues).

This sequence belongs to the LIF/OSM family. Post-translationally, propeptide processing is not important for receptor binding activity but may be important growth-inhibitory activity.

It is found in the secreted. Functionally, growth regulator. Inhibits the proliferation of a number of tumor cell lines. It regulates cytokine production, including IL-6, G-CSF and GM-CSF from endothelial cells. Uses only type II OSM receptor (heterodimers composed of OSMR and IL6ST). Involved in the maturation of fetal hepatocytes, thereby promoting liver development and regeneration. The polypeptide is Oncostatin-M (Osm) (Mus musculus (Mouse)).